The following is a 317-amino-acid chain: Beta-ketoacyl-[acyl-carrier-protein] synthase III (317 aa).

Residues cysteine 112 and histidine 244 contribute to the active site. An ACP-binding region spans residues 245–249; the sequence is QANLR. The active site involves asparagine 274.

This sequence belongs to the thiolase-like superfamily. FabH family. Homodimer.

The protein localises to the cytoplasm. The enzyme catalyses malonyl-[ACP] + acetyl-CoA + H(+) = 3-oxobutanoyl-[ACP] + CO2 + CoA. The protein operates within lipid metabolism; fatty acid biosynthesis. Catalyzes the condensation reaction of fatty acid synthesis by the addition to an acyl acceptor of two carbons from malonyl-ACP. Catalyzes the first condensation reaction which initiates fatty acid synthesis and may therefore play a role in governing the total rate of fatty acid production. Possesses both acetoacetyl-ACP synthase and acetyl transacylase activities. Its substrate specificity determines the biosynthesis of branched-chain and/or straight-chain of fatty acids. The chain is Beta-ketoacyl-[acyl-carrier-protein] synthase III from Salmonella paratyphi B (strain ATCC BAA-1250 / SPB7).